Here is an 87-residue protein sequence, read N- to C-terminus: uncharacterized protein (87 aa).

This is an uncharacterized protein from Escherichia coli.